Here is a 197-residue protein sequence, read N- to C-terminus: Ras-related protein Rab-7B (197 aa).

Residues 14–21 (GEKSVGKT), 33–38 (VTLKPT), 57–61 (DTSGQ), 119–122 (NKID), and 152–153 (AK) contribute to the GTP site. Positions 31–39 (RFVTLKPTI) match the Effector region motif. 2 S-geranylgeranyl cysteine lipidation sites follow: Cys-196 and Cys-197.

It belongs to the small GTPase superfamily. Rab family.

Protein transport. Probably involved in vesicular traffic. This Dictyostelium discoideum (Social amoeba) protein is Ras-related protein Rab-7B (rab7B).